Here is a 178-residue protein sequence, read N- to C-terminus: MAASLGGMFAGQPPGPPPPPPGLPGQASLLQAAPGAPRPSNSTLVDELESSFEACFASLVSQDYVNGTDQEEIRTGVDQCIQKFLDIARQTECFFLQKRLQLSVQKPDQVIKEDVSELRSELQRKDALVQKHLTKLRHWQQVLEDINVQHKKPADMPQGSLAYLEQASANIPAPLKQT.

The disordered stretch occupies residues 1-43; the sequence is MAASLGGMFAGQPPGPPPPPPGLPGQASLLQAAPGAPRPSNST. Residues 13–23 show a composition bias toward pro residues; the sequence is PPGPPPPPPGL. Residues 109-145 are a coiled coil; sequence QVIKEDVSELRSELQRKDALVQKHLTKLRHWQQVLED.

The protein belongs to the Mediator complex subunit 28 family. As to quaternary structure, forms a ternary complex with NF2/merlin and GRB2. Binds to actin. Component of the Mediator complex, which is probably composed of MED1, MED4, MED6, MED7, MED8, MED9, MED10, MED11, MED12, MED13, MED13L, MED14, MED15, MED16, MED17, MED18, MED19, MED20, MED21, MED22, MED23, MED24, MED25, MED26, MED27, MED29, MED30, MED31, CCNC, CDK8 and CDC2L6/CDK11. The MED12, MED13, CCNC and CDK8 subunits form a distinct module termed the CDK8 module. Mediator containing the CDK8 module is less active than Mediator lacking this module in supporting transcriptional activation. Individual preparations of the Mediator complex lacking one or more distinct subunits have been variously termed ARC, CRSP, DRIP, PC2, SMCC and TRAP.

The protein resides in the nucleus. It localises to the cytoplasm. The protein localises to the membrane. In terms of biological role, may be part of a complex containing NF2/merlin that participates in cellular signaling to the actin cytoskeleton downstream of tyrosine kinase signaling pathways. Component of the Mediator complex, a coactivator involved in the regulated transcription of nearly all RNA polymerase II-dependent genes. Mediator functions as a bridge to convey information from gene-specific regulatory proteins to the basal RNA polymerase II transcription machinery. Mediator is recruited to promoters by direct interactions with regulatory proteins and serves as a scaffold for the assembly of a functional preinitiation complex with RNA polymerase II and the general transcription factors. The sequence is that of Mediator of RNA polymerase II transcription subunit 28 (Med28) from Rattus norvegicus (Rat).